Reading from the N-terminus, the 396-residue chain is MFENVVGLIVEYNPFHNGHLHHIQEIDRLFEDNIKIAVMSGDYVQRGEPSLINKLEKTKIALSQGIDIVIELPTFYSTQSAEIFAKGSVNLLNKLSCSHIVFGSESNDLDKLKRIATISLTKEFELSLREFLAEGFSYPTAFSKVLFDEKLGSNDILALEYLRAIKTINSKIEAYCIKREKTGYYDDEKDNFSSATYIRKILLDSNEKKENKLNKIKNLVPEFSYKILEENFGVFSCLSDFYDLIKYNIIKNCSELKNIQDLEIGLENRLYKYSLENLKFEDFFNEVLTKRITISRLQRILLHSLFNLTENITEKVKNEVPFVKILGFSTKGQKYLNYLKKSKNYNERKILTSNRNLKEILNEEEAKLFNFNELCSQIYRIKSSYINIGYPIIKKD.

ATP is bound by residues 9–22, G103, N154, and R179; that span reads IVEYNPFHNGHLHH.

Belongs to the TmcAL family.

The protein localises to the cytoplasm. The enzyme catalyses cytidine(34) in elongator tRNA(Met) + acetate + ATP = N(4)-acetylcytidine(34) in elongator tRNA(Met) + AMP + diphosphate. Catalyzes the formation of N(4)-acetylcytidine (ac(4)C) at the wobble position of elongator tRNA(Met), using acetate and ATP as substrates. First activates an acetate ion to form acetyladenylate (Ac-AMP) and then transfers the acetyl group to tRNA to form ac(4)C34. The sequence is that of tRNA(Met) cytidine acetate ligase from Fusobacterium nucleatum subsp. nucleatum (strain ATCC 25586 / DSM 15643 / BCRC 10681 / CIP 101130 / JCM 8532 / KCTC 2640 / LMG 13131 / VPI 4355).